A 170-amino-acid polypeptide reads, in one-letter code: NADPH-dependent 7-cyano-7-deazaguanine reductase (170 aa).

Catalysis depends on Cys-58, which acts as the Thioimide intermediate. Asp-65 (proton donor) is an active-site residue. Substrate-binding positions include 80 to 82 (VES) and 99 to 100 (HE).

This sequence belongs to the GTP cyclohydrolase I family. QueF type 1 subfamily.

The protein resides in the cytoplasm. It catalyses the reaction 7-aminomethyl-7-carbaguanine + 2 NADP(+) = 7-cyano-7-deazaguanine + 2 NADPH + 3 H(+). It functions in the pathway tRNA modification; tRNA-queuosine biosynthesis. In terms of biological role, catalyzes the NADPH-dependent reduction of 7-cyano-7-deazaguanine (preQ0) to 7-aminomethyl-7-deazaguanine (preQ1). This chain is NADPH-dependent 7-cyano-7-deazaguanine reductase, found in Bdellovibrio bacteriovorus (strain ATCC 15356 / DSM 50701 / NCIMB 9529 / HD100).